Consider the following 294-residue polypeptide: Small ribosomal subunit protein uS2 (294 aa).

Residues 261-274 (MDEDADSKKSKAEE) are compositionally biased toward basic and acidic residues. Residues 261-294 (MDEDADSKKSKAEEPVIPTAEEPAITTIEVDQNE) form a disordered region.

The protein belongs to the universal ribosomal protein uS2 family.

This Leptospira borgpetersenii serovar Hardjo-bovis (strain JB197) protein is Small ribosomal subunit protein uS2.